The sequence spans 347 residues: N-acetyl-gamma-glutamyl-phosphate reductase (347 aa).

Cys-152 is an active-site residue.

This sequence belongs to the NAGSA dehydrogenase family. Type 1 subfamily.

It is found in the cytoplasm. It carries out the reaction N-acetyl-L-glutamate 5-semialdehyde + phosphate + NADP(+) = N-acetyl-L-glutamyl 5-phosphate + NADPH + H(+). Its pathway is amino-acid biosynthesis; L-arginine biosynthesis; N(2)-acetyl-L-ornithine from L-glutamate: step 3/4. Its function is as follows. Catalyzes the NADPH-dependent reduction of N-acetyl-5-glutamyl phosphate to yield N-acetyl-L-glutamate 5-semialdehyde. This is N-acetyl-gamma-glutamyl-phosphate reductase from Neisseria meningitidis serogroup C (strain 053442).